A 1042-amino-acid polypeptide reads, in one-letter code: Serine/threonine-protein kinase LATS2 (1042 aa).

Residues 23–44 (REGLKQPSKASTQGLLVGPNSD) are disordered. Polar residues predominate over residues 30–44 (SKASTQGLLVGPNSD). Ser82 is subject to Phosphoserine; by AURKA. A UBA domain is found at 97–138 (EVNRQMLQELVNAGCDQEMAGRALKQTGSRSIEAALEYISKM). Residues 100–140 (RQMLQELVNAGCDQEMAGRALKQTGSRSIEAALEYISKMGY) form an interaction with ubiquitinated AMOTL2 region. The tract at residues 237-282 (HFPGTHYGRGHLLSEQPGYGVQRSSSFQNKTPPDAYSSMAKAQGGP) is disordered. Residues 258 to 267 (QRSSSFQNKT) show a composition bias toward polar residues. Thr267 carries the phosphothreonine modification. Ser362 carries the post-translational modification Phosphoserine. Disordered regions lie at residues 378-399 (RAGPSRTNSFNNPQPEPSLPAP), 442-481 (PATESLETKEGSAGPHPLDVDYGGSERRCPPPPYPKHLLL), and 501-550 (QSLR…KRES). The PPxY motif signature appears at 472–475 (PPPY). Basic and acidic residues predominate over residues 507–530 (TEQDRSDKSHKGAKGDKAGRDKKQ). Phosphoserine is present on Ser534. The span at 541 to 550 (NSRDEEKRES) shows a compositional bias: basic and acidic residues. Positions 626-931 (FVKIKTLGIG…ADDLKAHPFF (306 aa)) constitute a Protein kinase domain. Residues 632–640 (LGIGAFGEV) and Lys655 each bind ATP. The Proton acceptor role is filled by Asp749. One can recognise an AGC-kinase C-terminal domain in the interval 932 to 1010 (NTIDFSRDIR…RRFFDDNGYP (79 aa)). Position 999 is a phosphothreonine (Thr999). The tract at residues 1014–1042 (PKPSEPAESADPGDADLEGAAEGCQPVYV) is disordered.

The protein belongs to the protein kinase superfamily. AGC Ser/Thr protein kinase family. In terms of assembly, interacts with and is phosphorylated by AURKA. Binds to AR. Interacts with AJUBA during mitosis and this complex regulates organization of the spindle apparatus through recruitment of gamma-tubulin to the centrosome. Interacts (via PPxY motif) with YAP1 (via WW domains). Interacts with MOB1A and MOB1B. Interacts with LIMD1, WTIP and AJUBA. Interacts with SNAI1. Interacts with WWC1, WWC2 and WWC3 (via their WW domains). Interacts (via UBA domain) with ubiquitinated AMOTL2; the interaction promotes LATS2 phosphorylation of YAP1. The cofactor is Mg(2+). In terms of processing, autophosphorylated and phosphorylated during M-phase and the G1/S-phase of the cell cycle. Phosphorylated and activated by STK3/MST2. Phosphorylated by MAP4Ks; in parallel to STK3/MST2 and resulting to its activation. Phosphorylation by NUAK2 may regulate its activity in phosphorylation and inactivation YAP1. As to expression, expressed at high levels in ovary and testis and at lower levels in all other tissues examined.

It localises to the cytoplasm. The protein localises to the cytoskeleton. The protein resides in the microtubule organizing center. Its subcellular location is the centrosome. It is found in the spindle pole. It localises to the nucleus. It carries out the reaction L-seryl-[protein] + ATP = O-phospho-L-seryl-[protein] + ADP + H(+). The enzyme catalyses L-threonyl-[protein] + ATP = O-phospho-L-threonyl-[protein] + ADP + H(+). In terms of biological role, negative regulator of YAP1 in the Hippo signaling pathway that plays a pivotal role in organ size control and tumor suppression by restricting proliferation and promoting apoptosis. The core of this pathway is composed of a kinase cascade wherein STK3/MST2 and STK4/MST1, in complex with its regulatory protein SAV1, phosphorylates and activates LATS1/2 in complex with its regulatory protein MOB1, which in turn phosphorylates and inactivates YAP1 oncoprotein and WWTR1/TAZ. Phosphorylation of YAP1 by LATS2 inhibits its translocation into the nucleus to regulate cellular genes important for cell proliferation, cell death, and cell migration. Also phosphorylates YAP1 in response to cell contact inhibition-driven WWP1 ubiquitination of AMOTL2, which results in LATS2 activation. Acts as a tumor suppressor which plays a critical role in centrosome duplication, maintenance of mitotic fidelity and genomic stability. Negatively regulates G1/S transition by down-regulating cyclin E/CDK2 kinase activity. Negative regulator of the androgen receptor. Phosphorylates SNAI1 in the nucleus leading to its nuclear retention and stabilization, which enhances its epithelial-mesenchymal transition and tumor cell invasion/migration activities. This tumor-promoting activity is independent of its effects upon YAP1 or WWTR1/TAZ. Acts as an activator of the NLRP3 inflammasome by mediating phosphorylation of 'Ser-265' of NLRP3 following NLRP3 palmitoylation, promoting NLRP3 activation by NEK7. The chain is Serine/threonine-protein kinase LATS2 from Mus musculus (Mouse).